The chain runs to 960 residues: Probable glutamyl endopeptidase, chloroplastic (960 aa).

The transit peptide at 1-62 (MMRFHKACHR…FSENPLTTVM (62 aa)) directs the protein to the chloroplast. A disordered region spans residues 78–98 (SGGAEDGGGTSNGSLSASATA). Polar residues predominate over residues 89 to 98 (NGSLSASATA). Residues S780, D854, and H888 each act as charge relay system in the active site. The interval 915 to 960 (TSDADTSPDQSKEGSDSADKVSTGTGGGNPEFGEHEVHSKLRRSLL) is disordered. Positions 924–933 (QSKEGSDSAD) are enriched in basic and acidic residues.

The protein belongs to the peptidase S9D family.

It localises to the plastid. It is found in the chloroplast stroma. Its function is as follows. Serine-type protease active in vitro against the LHCII N-terminal. Cleaves its substrate on the carboxy-side of Glu residues. This chain is Probable glutamyl endopeptidase, chloroplastic (GEP), found in Arabidopsis thaliana (Mouse-ear cress).